We begin with the raw amino-acid sequence, 227 residues long: Cytochrome c oxidase subunit 2 (227 aa).

Over 1–14 (MAYPLQMGLQDATS) the chain is Mitochondrial intermembrane. Residues 15 to 45 (PIMEELLHFHDHTLMIVFLISSLVLYIISLM) traverse the membrane as a helical segment. At 46–59 (LTTKLTHTSTMDAQ) the chain is on the mitochondrial matrix side. The chain crosses the membrane as a helical span at residues 60-87 (EVETVWTILPAIILILIALPSLRILYMM). At 88–227 (DEINNPSLTV…HFEKWSTSML (140 aa)) the chain is on the mitochondrial intermembrane side. The Cu cation site is built by His161, Cys196, Glu198, Cys200, His204, and Met207. Glu198 contacts Mg(2+).

Belongs to the cytochrome c oxidase subunit 2 family. Component of the cytochrome c oxidase (complex IV, CIV), a multisubunit enzyme composed of 14 subunits. The complex is composed of a catalytic core of 3 subunits MT-CO1, MT-CO2 and MT-CO3, encoded in the mitochondrial DNA, and 11 supernumerary subunits COX4I, COX5A, COX5B, COX6A, COX6B, COX6C, COX7A, COX7B, COX7C, COX8 and NDUFA4, which are encoded in the nuclear genome. The complex exists as a monomer or a dimer and forms supercomplexes (SCs) in the inner mitochondrial membrane with NADH-ubiquinone oxidoreductase (complex I, CI) and ubiquinol-cytochrome c oxidoreductase (cytochrome b-c1 complex, complex III, CIII), resulting in different assemblies (supercomplex SCI(1)III(2)IV(1) and megacomplex MCI(2)III(2)IV(2)). Found in a complex with TMEM177, COA6, COX18, COX20, SCO1 and SCO2. Interacts with TMEM177 in a COX20-dependent manner. Interacts with COX20. Interacts with COX16. Cu cation is required as a cofactor.

It is found in the mitochondrion inner membrane. It catalyses the reaction 4 Fe(II)-[cytochrome c] + O2 + 8 H(+)(in) = 4 Fe(III)-[cytochrome c] + 2 H2O + 4 H(+)(out). Its function is as follows. Component of the cytochrome c oxidase, the last enzyme in the mitochondrial electron transport chain which drives oxidative phosphorylation. The respiratory chain contains 3 multisubunit complexes succinate dehydrogenase (complex II, CII), ubiquinol-cytochrome c oxidoreductase (cytochrome b-c1 complex, complex III, CIII) and cytochrome c oxidase (complex IV, CIV), that cooperate to transfer electrons derived from NADH and succinate to molecular oxygen, creating an electrochemical gradient over the inner membrane that drives transmembrane transport and the ATP synthase. Cytochrome c oxidase is the component of the respiratory chain that catalyzes the reduction of oxygen to water. Electrons originating from reduced cytochrome c in the intermembrane space (IMS) are transferred via the dinuclear copper A center (CU(A)) of subunit 2 and heme A of subunit 1 to the active site in subunit 1, a binuclear center (BNC) formed by heme A3 and copper B (CU(B)). The BNC reduces molecular oxygen to 2 water molecules using 4 electrons from cytochrome c in the IMS and 4 protons from the mitochondrial matrix. The sequence is that of Cytochrome c oxidase subunit 2 (MT-CO2) from Phoca vitulina (Harbor seal).